The chain runs to 188 residues: Threonylcarbamoyl-AMP synthase (188 aa).

Residues 3-188 (QLQPSAVATT…RSGQILRNGS (186 aa)) enclose the YrdC-like domain.

The protein belongs to the SUA5 family. TsaC subfamily.

It is found in the cytoplasm. It carries out the reaction L-threonine + hydrogencarbonate + ATP = L-threonylcarbamoyladenylate + diphosphate + H2O. Its function is as follows. Required for the formation of a threonylcarbamoyl group on adenosine at position 37 (t(6)A37) in tRNAs that read codons beginning with adenine. Catalyzes the conversion of L-threonine, HCO(3)(-)/CO(2) and ATP to give threonylcarbamoyl-AMP (TC-AMP) as the acyladenylate intermediate, with the release of diphosphate. This chain is Threonylcarbamoyl-AMP synthase, found in Shewanella frigidimarina (strain NCIMB 400).